We begin with the raw amino-acid sequence, 320 residues long: Sensor histidine kinase YbdK (320 aa).

The helical transmembrane segment at 1–21 (MLLFTAVISVPMLLLAVSVLM) threads the bilayer. Topologically, residues 22 to 41 (SVIYDSMFKPMNHGMPFHRS) are extracellular. Residues 42-62 (FAYPAMIVVFLISLLLLAFLF) form a helical membrane-spanning segment. Residues 63 to 320 (SKSIHSLLHK…NGTGFLFSKE (258 aa)) are Cytoplasmic-facing. The HAMP domain maps to 67-120 (HSLLHKINLLNQTIRHLASDQRVPDKIEVKRADEIGELIKSVNLLIERTTYREL). One can recognise a Histidine kinase domain in the interval 135 to 320 (KLRHDINTPL…NGTGFLFSKE (186 aa)). Position 138 is a phosphohistidine; by autocatalysis (His138).

The protein resides in the cell membrane. The catalysed reaction is ATP + protein L-histidine = ADP + protein N-phospho-L-histidine.. Functionally, member of the two-component regulatory system YbdK/YbdJ. Probably activates YbdJ by phosphorylation. The protein is Sensor histidine kinase YbdK (ybdK) of Bacillus subtilis (strain 168).